Reading from the N-terminus, the 316-residue chain is Transaldolase (316 aa).

Residue K131 is the Schiff-base intermediate with substrate of the active site.

This sequence belongs to the transaldolase family. Type 1 subfamily. Homodimer.

The protein resides in the cytoplasm. The catalysed reaction is D-sedoheptulose 7-phosphate + D-glyceraldehyde 3-phosphate = D-erythrose 4-phosphate + beta-D-fructose 6-phosphate. It functions in the pathway carbohydrate degradation; pentose phosphate pathway; D-glyceraldehyde 3-phosphate and beta-D-fructose 6-phosphate from D-ribose 5-phosphate and D-xylulose 5-phosphate (non-oxidative stage): step 2/3. Functionally, transaldolase is important for the balance of metabolites in the pentose-phosphate pathway. This chain is Transaldolase, found in Buchnera aphidicola subsp. Acyrthosiphon pisum (strain 5A).